The following is a 782-amino-acid chain: Semaphorin-3G (782 aa).

The first 22 residues, 1 to 22 (MAPSAWAICWLLGGLLLHGGSS), serve as a signal peptide directing secretion. The Sema domain maps to 32-519 (RLRLSYRDLL…SRLGVAQLRL (488 aa)). A glycan (N-linked (GlcNAc...) asparagine) is linked at Asn44. Cys105 and Cys116 are joined by a disulfide. The N-linked (GlcNAc...) asparagine glycan is linked to Asn127. Disulfide bonds link Cys134–Cys143, Cys270–Cys382, Cys294–Cys342, Cys522–Cys540, and Cys603–Cys655. Residues 569–671 (PALQCLGQSQ…FSQTVVRLAL (103 aa)) enclose the Ig-like C2-type domain.

The protein belongs to the semaphorin family.

It localises to the secreted. Functionally, has chemorepulsive activities for sympathetic axons. Ligand of NRP2. In Homo sapiens (Human), this protein is Semaphorin-3G (SEMA3G).